Reading from the N-terminus, the 205-residue chain is V-type ATP synthase subunit E (205 aa).

It belongs to the V-ATPase E subunit family.

Its function is as follows. Produces ATP from ADP in the presence of a proton gradient across the membrane. In Treponema denticola (strain ATCC 35405 / DSM 14222 / CIP 103919 / JCM 8153 / KCTC 15104), this protein is V-type ATP synthase subunit E.